A 243-amino-acid polypeptide reads, in one-letter code: Orotidine 5'-phosphate decarboxylase (243 aa).

Substrate-binding positions include Asp-12, Lys-34, 61 to 70 (DLKFHDIPNT), Thr-125, Arg-187, Gln-196, Gly-216, and Arg-217. Lys-63 serves as the catalytic Proton donor.

The protein belongs to the OMP decarboxylase family. Type 1 subfamily. Homodimer.

The catalysed reaction is orotidine 5'-phosphate + H(+) = UMP + CO2. Its pathway is pyrimidine metabolism; UMP biosynthesis via de novo pathway; UMP from orotate: step 2/2. Its function is as follows. Catalyzes the decarboxylation of orotidine 5'-monophosphate (OMP) to uridine 5'-monophosphate (UMP). The polypeptide is Orotidine 5'-phosphate decarboxylase (Heliobacterium modesticaldum (strain ATCC 51547 / Ice1)).